A 413-amino-acid chain; its full sequence is Argininosuccinate synthase (413 aa).

Residues 14–22 (AYSGGLDTS) and alanine 41 each bind ATP. Residues tyrosine 94 and serine 99 each contribute to the L-citrulline site. Glycine 124 contacts ATP. Residues threonine 126, asparagine 130, and aspartate 131 each contribute to the L-aspartate site. Asparagine 130 is an L-citrulline binding site. Residues arginine 134, serine 185, serine 194, glutamate 270, and tyrosine 282 each contribute to the L-citrulline site.

The protein belongs to the argininosuccinate synthase family. Type 1 subfamily. As to quaternary structure, homotetramer.

Its subcellular location is the cytoplasm. It catalyses the reaction L-citrulline + L-aspartate + ATP = 2-(N(omega)-L-arginino)succinate + AMP + diphosphate + H(+). The protein operates within amino-acid biosynthesis; L-arginine biosynthesis; L-arginine from L-ornithine and carbamoyl phosphate: step 2/3. The protein is Argininosuccinate synthase of Hyphomonas neptunium (strain ATCC 15444).